The following is a 253-amino-acid chain: MLTIDINCDCGESYGAFQVGDDDGILPFVSSANVACGGHAGDPMVMRRTVRRCRDLGVAVGAHPSYPDLYGFGRRVLPLTPDEIEAWVLTQIGSLAAIARSEKVELRHVKPHGALYNVAARDLTVAMAIARAVAAFSRELALVGLAGSLLITAGHEVGVPVLAEAFADRTYEADGTLRNRHHPDALIIDPAACLAQTLHIIRDGAVRAVDGTLVPLQAATICIHGDTPGAALRAATIRQGLAAAGITVQAPQR.

It belongs to the LamB/PxpA family. As to quaternary structure, forms a complex composed of PxpA, PxpB and PxpC.

The catalysed reaction is 5-oxo-L-proline + ATP + 2 H2O = L-glutamate + ADP + phosphate + H(+). Its function is as follows. Catalyzes the cleavage of 5-oxoproline to form L-glutamate coupled to the hydrolysis of ATP to ADP and inorganic phosphate. This is 5-oxoprolinase subunit A from Chloroflexus aurantiacus (strain ATCC 29364 / DSM 637 / Y-400-fl).